The chain runs to 200 residues: Protein OPI10 homolog (200 aa).

It belongs to the OPI10 family.

It is found in the cytoplasm. Its subcellular location is the nucleus envelope. The sequence is that of Protein OPI10 homolog from Schizosaccharomyces pombe (strain 972 / ATCC 24843) (Fission yeast).